We begin with the raw amino-acid sequence, 223 residues long: Protein FAM3D (223 aa).

The N-terminal stretch at 1–25 is a signal peptide; sequence MRVAGLIRVVVFIFTIVTMWVFLRS. 2 disulfides stabilise this stretch: cysteine 54-cysteine 82 and cysteine 60-cysteine 217. The GG-type lectin domain maps to 62-221; that stretch reads NNFFAFKISS…LELEGCVPRK (160 aa). Asparagine 106 carries N-linked (GlcNAc...) asparagine glycosylation.

This sequence belongs to the FAM3 family.

The protein localises to the secreted. This chain is Protein FAM3D, found in Mus musculus (Mouse).